The chain runs to 644 residues: Acetyl-coenzyme A synthetase 2 (644 aa).

CoA-binding positions include 189–192 (RGGK), Thr307, and Asn331. Residues 383–385 (GEP), 407–412 (DTWWQT), Asp496, and Arg511 each bind ATP. A CoA-binding site is contributed by Ser519. An ATP-binding site is contributed by Arg522. 3 residues coordinate Mg(2+): Val533, His535, and Val538. An N6-acetyllysine modification is found at Lys605.

The protein belongs to the ATP-dependent AMP-binding enzyme family. Mg(2+) serves as cofactor. Post-translationally, acetylated. Deacetylation by the SIR2-homolog deacetylase activates the enzyme.

The enzyme catalyses acetate + ATP + CoA = acetyl-CoA + AMP + diphosphate. In terms of biological role, catalyzes the conversion of acetate into acetyl-CoA (AcCoA), an essential intermediate at the junction of anabolic and catabolic pathways. AcsA undergoes a two-step reaction. In the first half reaction, AcsA combines acetate with ATP to form acetyl-adenylate (AcAMP) intermediate. In the second half reaction, it can then transfer the acetyl group from AcAMP to the sulfhydryl group of CoA, forming the product AcCoA. In Pseudomonas putida (strain ATCC 47054 / DSM 6125 / CFBP 8728 / NCIMB 11950 / KT2440), this protein is Acetyl-coenzyme A synthetase 2.